The primary structure comprises 406 residues: Coenzyme A biosynthesis bifunctional protein CoaBC (406 aa).

Residues 2-190 (SLAGKKIVLG…SPVNDLKHLN (189 aa)) are phosphopantothenoylcysteine decarboxylase. Cys-158 (proton donor) is an active-site residue. The phosphopantothenate--cysteine ligase stretch occupies residues 191–406 (IMITAGPTRE…VTRYDEKNRR (216 aa)). CTP is bound by residues 273 to 275 (GCA), Asp-279, Lys-289, 308 to 311 (PDIV), Phe-327, Lys-341, and Lys-345.

This sequence in the N-terminal section; belongs to the HFCD (homo-oligomeric flavin containing Cys decarboxylase) superfamily. In the C-terminal section; belongs to the PPC synthetase family. Requires Mg(2+) as cofactor. The cofactor is FMN.

It carries out the reaction N-[(R)-4-phosphopantothenoyl]-L-cysteine + H(+) = (R)-4'-phosphopantetheine + CO2. The enzyme catalyses (R)-4'-phosphopantothenate + L-cysteine + CTP = N-[(R)-4-phosphopantothenoyl]-L-cysteine + CMP + diphosphate + H(+). It functions in the pathway cofactor biosynthesis; coenzyme A biosynthesis; CoA from (R)-pantothenate: step 2/5. It participates in cofactor biosynthesis; coenzyme A biosynthesis; CoA from (R)-pantothenate: step 3/5. Its function is as follows. Catalyzes two sequential steps in the biosynthesis of coenzyme A. In the first step cysteine is conjugated to 4'-phosphopantothenate to form 4-phosphopantothenoylcysteine. In the second step the latter compound is decarboxylated to form 4'-phosphopantotheine. This Escherichia coli O6:H1 (strain CFT073 / ATCC 700928 / UPEC) protein is Coenzyme A biosynthesis bifunctional protein CoaBC.